The sequence spans 464 residues: Glutamate--tRNA ligase (464 aa).

The 'HIGH' region motif lies at 8–18 (PSPTGYMHLGN). Zn(2+)-binding residues include Cys-96, Cys-98, Cys-123, and His-125. Residues 240–244 (KLSKR) carry the 'KMSKS' region motif. Position 243 (Lys-243) interacts with ATP.

It belongs to the class-I aminoacyl-tRNA synthetase family. Glutamate--tRNA ligase type 1 subfamily. Monomer. Zn(2+) serves as cofactor.

It localises to the cytoplasm. It carries out the reaction tRNA(Glu) + L-glutamate + ATP = L-glutamyl-tRNA(Glu) + AMP + diphosphate. Catalyzes the attachment of glutamate to tRNA(Glu) in a two-step reaction: glutamate is first activated by ATP to form Glu-AMP and then transferred to the acceptor end of tRNA(Glu). The polypeptide is Glutamate--tRNA ligase (Hydrogenobaculum sp. (strain Y04AAS1)).